Reading from the N-terminus, the 867-residue chain is Ent-copalyl diphosphate synthase 1, chloroplastic (867 aa).

A chloroplast-targeting transit peptide spans 1 to 35; it reads MIHLHSPPTAPAAFGGAGSADWRRRRRWSWSSSSR. The segment at 1–134 is disordered; the sequence is MIHLHSPPTA…ADEEADDELQ (134 aa). Positions 51–64 are enriched in basic and acidic residues; that stretch reads RGGDDGGGEDHHAD. Positions 74–89 are enriched in low complexity; that stretch reads AWRARATTAGVSSSSS. The segment covering 99-121 has biased composition (basic and acidic residues); the sequence is IEHETPRITKWPNESRDLDDHQQ. Over residues 124 to 133 the composition is skewed to acidic residues; that stretch reads EADEEADDEL. Lys286 contributes to the substrate binding site. The short motif at 418-421 is the DXDD motif element; that stretch reads EVDD. Position 504 (Lys504) interacts with substrate.

It belongs to the terpene synthase family. The cofactor is Mg(2+).

It localises to the plastid. Its subcellular location is the chloroplast. The enzyme catalyses (2E,6E,10E)-geranylgeranyl diphosphate = ent-copalyl diphosphate. Its pathway is plant hormone biosynthesis; gibberellin biosynthesis. In terms of biological role, catalyzes the conversion of geranylgeranyl diphosphate to the gibberellin precursor ent-copalyl diphosphate. This Oryza sativa subsp. japonica (Rice) protein is Ent-copalyl diphosphate synthase 1, chloroplastic (CPS1).